We begin with the raw amino-acid sequence, 157 residues long: Parasitophorous vacuole membrane protein S16 (157 aa).

An N-terminal signal peptide occupies residues 1-25 (MNIRKFIPSLALMLIFFAFANLVLS). The Extracellular portion of the chain corresponds to 26-105 (DANDKAKKPA…DKKTTVNRNL (80 aa)). Positions 30–74 (KAKKPAGKGSPSTLQTPGSSSGASLHAVGPNQGGLSQGLSGKDSA) are disordered. The span at 39–52 (SPSTLQTPGSSSGA) shows a compositional bias: polar residues. The helical transmembrane segment at 106–126 (IISTAVTNMIMLIILSGIVGF) threads the bilayer. Over 127 to 157 (KVKKTKNADDDKGDKDKDKDNTDEGDEGDDS) the chain is Cytoplasmic. The interval 130–157 (KTKNADDDKGDKDKDKDNTDEGDEGDDS) is disordered. A compositionally biased stretch (basic and acidic residues) spans 132–148 (KNADDDKGDKDKDKDNT).

Its subcellular location is the parasitophorous vacuole membrane. The protein resides in the vacuole. In terms of biological role, involved in male gametogenesis. Required for exflagellation of male gametocytes. May play a role in parasite transmission in the mosquito. Binds to the mosquito vector midgut. The chain is Parasitophorous vacuole membrane protein S16 from Plasmodium falciparum (isolate 3D7).